Here is a 328-residue protein sequence, read N- to C-terminus: Embigin (328 aa).

An N-terminal signal peptide occupies residues 1 to 33; that stretch reads MRSHTGLRALVAPGCSLLLLYLLAATRPDRAVG. Over 34–264 the chain is Extracellular; that stretch reads DPADSAFTSL…VLSFMVPLKP (231 aa). Residues Asn-55, Asn-62, Asn-75, Asn-100, Asn-117, Asn-189, Asn-196, Asn-214, and Asn-219 are each glycosylated (N-linked (GlcNAc...) asparagine). 2 Ig-like domains span residues 67-160 and 159-254; these read EQTR…RVPK and PKVH…IKLV. 2 disulfide bridges follow: Cys-88–Cys-144 and Cys-180–Cys-238. A helical transmembrane segment spans residues 265–285; it reads FLAIIAEVILLVAIILLCEVY. Over 286–328 the chain is Cytoplasmic; it reads TQKKKNDPDDGKEFEQIEQLKSDDSNGIENNVPRYRKTDSGDQ. The segment covering 289–309 has biased composition (basic and acidic residues); the sequence is KKNDPDDGKEFEQIEQLKSDD. A disordered region spans residues 289-328; it reads KKNDPDDGKEFEQIEQLKSDDSNGIENNVPRYRKTDSGDQ. At Ser-310 the chain carries Phosphoserine.

In terms of assembly, interacts with SLC16A1, SLC16A6 and SLC16A7. Post-translationally, N-glycosylated. Detected in prostate, mammary gland and erythrocytes (at protein level). Detected in testis, brain, prostate, heart, kidney, liver, mammary gland and lung.

It localises to the cell membrane. Its subcellular location is the synapse. Plays a role in the outgrowth of motoneurons and in the formation of neuromuscular junctions. Following muscle denervation, promotes nerve terminal sprouting and the formation of additional acetylcholine receptor clusters at synaptic sites without affecting terminal Schwann cell number or morphology. Delays the retraction of terminal sprouts following re-innervation of denervated endplates. Plays a role in targeting the monocarboxylate transporters SLC16A1, SLC16A6 and SLC16A7 to the cell membrane. The chain is Embigin (Emb) from Rattus norvegicus (Rat).